A 244-amino-acid polypeptide reads, in one-letter code: Vesicle-associated membrane protein-associated protein SCS2 (244 aa).

Residue S2 is modified to N-acetylserine. The Cytoplasmic segment spans residues 2–222; sequence SAVEISPDVL…EAATVPAENE (221 aa). One can recognise an MSP domain in the interval 3–126; that stretch reads AVEISPDVLV…ISKKIKVKYL (124 aa). The residue at position 106 (S106) is a Phosphoserine. The interval 135–219 is disordered; that stretch reads QNQNIQENKE…QIKEAATVPA (85 aa). Positions 153 to 168 are enriched in basic and acidic residues; it reads SEPKEVPAVVNEKEVP. Residues 199–211 show a composition bias toward polar residues; the sequence is QTSNSTPAPQNQI. Residues 223–243 traverse the membrane as a helical; Anchor for type IV membrane protein segment; sequence SSSMGIFILVALLILVLGWFY. Residue R244 is a topological domain, lumenal.

The protein belongs to the VAMP-associated protein (VAP) (TC 9.B.17) family. Interacts with OPI1. Also interacts with PBI1. Interacts with EPO1.

Its subcellular location is the endoplasmic reticulum membrane. The protein localises to the nucleus membrane. Its function is as follows. Acts as an endoplasmic reticulum (ER) membrane anchor for cytoplasmic proteins via binding to the FFAT motif of targeted proteins. Regulates phospholipid biosynthesis by modulating the subcellular localization of the transcriptional repressor OPI1. Also contributes to the tethering of the ER to the plasma membrane. Allows interorganelle phosphatidylserine (PtdSer) transport via a process that involves the acceptor membrane complex PDR17-PDS2 that binds to PBI1 which in turn ligates to SCS2 and phosphatidic acid present in the donor membrane, forming a zone of apposition that facilitates PtdSer transfer. The chain is Vesicle-associated membrane protein-associated protein SCS2 from Saccharomyces cerevisiae (strain ATCC 204508 / S288c) (Baker's yeast).